A 319-amino-acid polypeptide reads, in one-letter code: Vesicle-associated membrane protein-associated protein scs22 (319 aa).

Residues 1 to 121 (MALECDSTIV…SERKIRCVYS (121 aa)) form the MSP domain. The Cytoplasmic segment spans residues 1–298 (MALECDSTIV…GAKVVPQIHN (298 aa)). Residues 127–150 (ANAHANAHHQPAQTTTTSIPTSAT) show a composition bias toward low complexity. The tract at residues 127-244 (ANAHANAHHQ…TTSPNNENNA (118 aa)) is disordered. Composition is skewed to polar residues over residues 151 to 165 (DNYTTVNGNVNQSYS), 185 to 201 (STATTQHTQLPKTSAVS), and 231 to 244 (SVPTTTSPNNENNA). T236 carries the phosphothreonine modification. A phosphoserine mark is found at S237 and S281. The helical; Anchor for type IV membrane protein transmembrane segment at 299 to 319 (TVTVQTAFLLAIICFLIGLLF) threads the bilayer.

It belongs to the VAMP-associated protein (VAP) (TC 9.B.17) family. As to quaternary structure, interacts with epr1.

The protein resides in the endoplasmic reticulum membrane. Its function is as follows. Vesicle-associated membrane protein-associated protein (VAP) implicated in maintaining the cortical endoplasmic reticulum (ER)-plasma membrane (PM) attachment. ER-PM contacts function to modulate the distribution of contractile ring components to ensure robust ring assembly. ER-PM contacts function also in controlling exocytosis and maintenance of cell polarity regulating cell shape. VAPs play an important role in regulating eisosome assembly. VAPs also contribute to ER-phagy by tethering atg8 to the ER membrane, but also by maintaining the ER-plasma membrane contact. The sequence is that of Vesicle-associated membrane protein-associated protein scs22 (scs22) from Schizosaccharomyces pombe (strain 972 / ATCC 24843) (Fission yeast).